The following is a 452-amino-acid chain: RRHHSPLLVSLIGGQTFKSSHSGAAYFGGICSPTHGGGVNEYGNIGAMAITLAQTLGQNLGMMWNKPRTTTGDCKCPDLWRGCIMEDTGFYLPQKFSRCSVDEYSKFLQDGGGSCLFNKPLKLLDPPSCGNGFIEIGEECDCGSPAECNKSRAGNCCKKCTLSHDAMCSDGLCCRGCKYEPRGTVCRESLNECDVPEACPGDSSACPANLHKQDGYFCDNEQGRCFGGRCKTRDRQCHALWGRGASDRFCYEKLNIEGTEKGNCGRDRQNWIQCSKQDVLCGYLLCSNISGIPQIGELNGDITSMSFYHQNRYLDCRGGQVTLPDGSCLGYVEDGTPCGPNMICLDRRCLPASAFNFSTCPGSWNGVICSDHGVCSNEGKCICHPEWTGKDCSVYDPLPVPKPTGVVEKYKGPSGTNIIIGSIAGAVLIAAIVLGGTGWGFKNIRRGRSGGG.

The region spanning 1-120 (RRHHSPLLVS…GGGSCLFNKP (120 aa)) is the Peptidase M12B domain. Over 1–417 (RRHHSPLLVS…EKYKGPSGTN (417 aa)) the chain is Extracellular. Disulfide bonds link cysteine 31–cysteine 115, cysteine 74–cysteine 99, and cysteine 76–cysteine 83. The Disintegrin domain maps to 126–214 (PPSCGNGFIE…ACPANLHKQD (89 aa)). Residue asparagine 149 is glycosylated (N-linked (GlcNAc...) asparagine). Cysteine 186 and cysteine 206 form a disulfide bridge. Residues asparagine 288 and asparagine 356 are each glycosylated (N-linked (GlcNAc...) asparagine). Intrachain disulfides connect cysteine 360–cysteine 375, cysteine 369–cysteine 381, and cysteine 383–cysteine 392. The 57-residue stretch at 360-416 (CPGSWNGVICSDHGVCSNEGKCICHPEWTGKDCSVYDPLPVPKPTGVVEKYKGPSGT) folds into the EGF-like domain. A helical transmembrane segment spans residues 418 to 438 (IIIGSIAGAVLIAAIVLGGTG). Over 439 to 452 (WGFKNIRRGRSGGG) the chain is Cytoplasmic.

Post-translationally, the precursor is cleaved by a furin endopeptidase. As to expression, detected in testis and barely expressed in heart and muscle. Not detectable in liver.

Its subcellular location is the presynaptic cell membrane. The protein localises to the perikaryon. It is found in the cell projection. The protein resides in the axon. Its function is as follows. Probable ligand for integrin in the brain. This is a non-catalytic metalloprotease-like protein. This is Disintegrin and metalloproteinase domain-containing protein 11 (adam11) from Xenopus laevis (African clawed frog).